Reading from the N-terminus, the 123-residue chain is uncharacterized protein (123 aa).

This is an uncharacterized protein from Saccharomyces cerevisiae (strain ATCC 204508 / S288c) (Baker's yeast).